We begin with the raw amino-acid sequence, 173 residues long: Beta-defensin 129 (173 aa).

The signal sequence occupies residues 1–19 (MKLLFPIFASLMLQYKVNT). Cystine bridges form between Cys-27–Cys-53, Cys-34–Cys-48, and Cys-38–Cys-54. Residues 144–173 (STKSNIKESRDSATASPPPAPPPPNTLPTP) are disordered. Residues 159–173 (SPPPAPPPPNTLPTP) are compositionally biased toward pro residues.

The protein belongs to the beta-defensin family.

The protein localises to the secreted. Functionally, has antibacterial activity. The sequence is that of Beta-defensin 129 (DEFB129) from Hylobates lar (Lar gibbon).